The chain runs to 379 residues: RIB43A-like with coiled-coils protein 1 (379 aa).

Coiled coils occupy residues glutamate 43–leucine 111 and isoleucine 285–arginine 337.

Belongs to the RIB43A family. In terms of assembly, microtubule inner protein component of sperm flagellar doublet microtubules.

The protein localises to the cytoplasm. Its subcellular location is the cytoskeleton. It localises to the flagellum axoneme. This is RIB43A-like with coiled-coils protein 1 (RIBC1) from Bos taurus (Bovine).